A 491-amino-acid polypeptide reads, in one-letter code: AAA-ATPase At2g46620 (491 aa).

Residues 1 to 21 (MGILWDSFLLLLVSTFALFLV) form a helical membrane-spanning segment. Position 238-245 (238-245 (GPSGTGKS)) interacts with ATP. The disordered stretch occupies residues 423–460 (GTGRRLLLENGSRKSTSEDVSDDMSGSLCGGGGGSSPA).

Belongs to the AAA ATPase family. BCS1 subfamily. The cofactor is Mg(2+).

The protein resides in the membrane. It carries out the reaction ATP + H2O = ADP + phosphate + H(+). This is AAA-ATPase At2g46620 from Arabidopsis thaliana (Mouse-ear cress).